Consider the following 1000-residue polypeptide: Chromosome transmission fidelity protein 18 homolog (1000 aa).

Disordered regions lie at residues 53-89 (SAGD…RDAS), 130-159 (AGNS…DSKF), and 272-301 (EFGE…SHSL). Over residues 60 to 70 (SNANSKPTGDS) the composition is skewed to polar residues. Residues 272-295 (EFGENDSEILENDDNAGEEDDEDE) are compositionally biased toward acidic residues. Position 396 to 403 (396 to 403 (GPPGLGKT)) interacts with ATP. Positions 888 to 898 (ARNAGRDNTTA) are enriched in polar residues. The disordered stretch occupies residues 888 to 916 (ARNAGRDNTTAAAAVKTADPKGAKSAAKP).

This sequence belongs to the activator 1 small subunits family. CTF18 subfamily. Component of the CTF18-RFC complex, which consists of ctf18, ctf8, dcc1, rfc2, rfc3, rfc4 and rfc5. The CTF18-RFC complex associates with pcna.

The protein localises to the nucleus. Its function is as follows. Chromosome cohesion factor involved in sister chromatid cohesion and fidelity of chromosome transmission. Component of one of the cell nuclear antigen loader complexes, CTF18-replication factor C (CTF18-RFC), which consists of ctf18, ctf8, dcc1, rfc2, rfc3, rfc4 and rfc5. The CTF18-RFC complex binds to single-stranded and primed DNAs and has weak ATPase activity that is stimulated by the presence of primed DNA, replication protein A (RPA) and by proliferating cell nuclear antigen (pcna). The CTF18-RFC complex catalyzes the ATP-dependent loading of pcna onto primed and gapped DNA. The polypeptide is Chromosome transmission fidelity protein 18 homolog (chtf18) (Xenopus laevis (African clawed frog)).